Here is a 125-residue protein sequence, read N- to C-terminus: NADPH-dependent 7-cyano-7-deazaguanine reductase (125 aa).

The active-site Thioimide intermediate is the cysteine 40. Aspartate 47 serves as the catalytic Proton donor. Residues 62–64 and 81–82 each bind substrate; these read LET and HE.

The protein belongs to the GTP cyclohydrolase I family. QueF type 1 subfamily.

It is found in the cytoplasm. It catalyses the reaction 7-aminomethyl-7-carbaguanine + 2 NADP(+) = 7-cyano-7-deazaguanine + 2 NADPH + 3 H(+). The protein operates within tRNA modification; tRNA-queuosine biosynthesis. Its function is as follows. Catalyzes the NADPH-dependent reduction of 7-cyano-7-deazaguanine (preQ0) to 7-aminomethyl-7-deazaguanine (preQ1). This chain is NADPH-dependent 7-cyano-7-deazaguanine reductase, found in Frankia casuarinae (strain DSM 45818 / CECT 9043 / HFP020203 / CcI3).